We begin with the raw amino-acid sequence, 1169 residues long: MKNNIQNQCVPYNCLSNPEVEILSEERSTGRLPLDISLSLTRFLLSEFVPGVGVAFGLFDLIWGFITPSEWSLFLLQIEQLIEQRIETLERNRAITTLRGLADSYEVYLEALREWEENPNNAQLREDVRIRFANTDDALITAINNFTLTSFEIPLLSVYVQAANLHLSLLRDAVSFGQGWGLDIATVNNHYNRLINLIHRYTEHCLDTYNQGLENLRGTNTRQWSRFNQFRRELTLTVLDIVALFPNYDARAYPIQTSSQLTREIYTSSVIEDSPVSANIPNGFNRAEFGVRPPHLMDFMNSLFVTAETVRSQTVWGGHLVSSRNTAGNPINFPIYGVFNPGGAIWIADEDPRPFYRTLSDPVFVRGGFGNPHYVLGLRGVGFQQTGTNHTRTFRNSGTIDSLDEIPPQDNSGAPWNDYSHVLNHVTFVRWPGEIAGSDSWRAPMFSWTHRSADRTNIINPNIITQIPAVKAHNLHSGSTVVRGPGFTGGDLLRRTNTGTFADIRVNITGPLSQRYRVRIRYASTTDLQFFTRINGTSVNQGNFQRTMNRGGNLESGNFRTAGFSTPFSFSNAQSTFTLGTQAFSNQEVYIDRIEFVPAEVTFEAESDLERAQKAVNALFTSTSQLGLKTNVTGYHIDQVSNLVACLSDEFCLDEKRELSEKVKHAKRLSDKRNLLQDPNFRGINRQPDHGWRGSTDITIQGGDDVFKENYVTLPGTFDECYPTYLYQKIDESKLKAYTRYQLRGYIEDSQDLEIYLIRYNSKHEIVNVPGTGSLWPLSVENQIGPCGEPNRCAPHLEWNPDLHCSCRDGEKCVHHSHHFSLDIDVGCTDLNEDLGVWLIFKIKTQDGHARLGNLEFLEEEPLLGEALARVKRAEKKWRDKREKLQLETNIVYKEAKESVDALFVNSQYDRLQADTNIAMIHAADKRVHRIREAYLPELSVIPGVNAAIFEELEGRIFTAYSLYDARNVIKNGNFNNGLLCWNVKGHVDVEEQNNHRSVLVVPEWEAEVSQEVRVCPGRGYILRVTAYKEGYGEGCVTIHEVDNNTDELKFSSNCEKEQVYPGNTVACNDYNKNHGANACSSRNGGYDESYESNSSIPADYAPVYEEEAYTDGQRGNPCEFNRGHTPLPAGYVTAELEYFPETDTVWVEIGETEGTFIVDSVELLLMEE.

The protein belongs to the delta endotoxin family.

Promotes colloidosmotic lysis by binding to the midgut epithelial cells of insects. The sequence is that of Pesticidal crystal protein Cry1Fb (cry1Fb) from Bacillus thuringiensis subsp. morrisoni.